The chain runs to 126 residues: Small ribosomal subunit protein uS12 (126 aa).

A 3-methylthioaspartic acid modification is found at Asp89.

Belongs to the universal ribosomal protein uS12 family. As to quaternary structure, part of the 30S ribosomal subunit. Contacts proteins S8 and S17. May interact with IF1 in the 30S initiation complex.

Functionally, with S4 and S5 plays an important role in translational accuracy. In terms of biological role, interacts with and stabilizes bases of the 16S rRNA that are involved in tRNA selection in the A site and with the mRNA backbone. Located at the interface of the 30S and 50S subunits, it traverses the body of the 30S subunit contacting proteins on the other side and probably holding the rRNA structure together. The combined cluster of proteins S8, S12 and S17 appears to hold together the shoulder and platform of the 30S subunit. In Carboxydothermus hydrogenoformans (strain ATCC BAA-161 / DSM 6008 / Z-2901), this protein is Small ribosomal subunit protein uS12.